We begin with the raw amino-acid sequence, 709 residues long: Elongation factor G (709 aa).

Residues 9–292 form the tr-type G domain; that stretch reads AYYRNIGISA…AVVEYLPSPT (284 aa). GTP-binding positions include 18–25, 89–93, and 143–146; these read AHIDAGKT, DTPGH, and NKMD.

The protein belongs to the TRAFAC class translation factor GTPase superfamily. Classic translation factor GTPase family. EF-G/EF-2 subfamily.

The protein resides in the cytoplasm. Functionally, catalyzes the GTP-dependent ribosomal translocation step during translation elongation. During this step, the ribosome changes from the pre-translocational (PRE) to the post-translocational (POST) state as the newly formed A-site-bound peptidyl-tRNA and P-site-bound deacylated tRNA move to the P and E sites, respectively. Catalyzes the coordinated movement of the two tRNA molecules, the mRNA and conformational changes in the ribosome. The chain is Elongation factor G from Blochmanniella floridana.